The primary structure comprises 396 residues: Interleukin-3 receptor subunit alpha (396 aa).

A signal peptide spans 1–16 (MAANLWLILGLLASHS). Topologically, residues 17 to 331 (SDLAAVREAP…VCPPEVMPVK (315 aa)) are extracellular. Cystine bridges form between C62/C79, C87/C223, C125/C134, C165/C187, and C245/C323. A glycan (N-linked (GlcNAc...) asparagine) is linked at N91. N-linked (GlcNAc...) asparagine glycosylation is found at N213, N246, N272, and N283. Residues 312-316 (LSSWS) carry the WSXWS motif motif. The helical transmembrane segment at 332–355 (TALVTSVATVLGAGLVAAGLLLWW) threads the bilayer. Residues 356-396 (RKSLLYRLCPPIPRLRLPLAGEMVVWEPALEDCEVTPVTDA) lie on the Cytoplasmic side of the membrane. K357 participates in a covalent cross-link: Glycyl lysine isopeptide (Lys-Gly) (interchain with G-Cter in ubiquitin). Residues 363–371 (LCPPIPRLR) carry the Box 1 motif motif.

It belongs to the type I cytokine receptor family. Type 5 subfamily. In terms of assembly, interacts with IL3. Heterodimer of an alpha and a beta subunit. The beta subunit is common to the IL3, IL5 and GM-CSF receptors. Ubiquitinated at Lys-357 by RNFT2 in response to IL3. Ubiquitination leads ligand-induced degradation by the proteasome. Ubiquitinated by RNF128 via 'Lys-27'-linked polyubiquitination, facilitating its degradation through the lysosomal pathway.

It is found in the cell membrane. It localises to the endomembrane system. Its function is as follows. Cell surface receptor for IL3 expressed on hematopoietic progenitor cells, monocytes and B-lymphocytes that controls the production and differentiation of hematopoietic progenitor cells into lineage-restricted cells. Ligand stimulation rapidly induces hetrodimerization with IL3RB, phosphorylation and enzyme activity of effector proteins such as JAK2 and PI3K that play a role in signaling cell proliferation and differentiation. Activation of JAK2 leads to STAT5-mediated transcriptional program. In Mus musculus (Mouse), this protein is Interleukin-3 receptor subunit alpha (Il3ra).